The following is a 433-amino-acid chain: Keratin, type I cytoskeletal 17 (433 aa).

A disordered region spans residues 1-24 (MTTTIRQFTSSSSIKGSSGLGGGS). Positions 1-83 (MTTTIRQFTS…GGVDGLLAGG (83 aa)) are head. Phosphoserine is present on residues Ser-12 and Ser-13. Lys-15 is covalently cross-linked (Glycyl lysine isopeptide (Lys-Gly) (interchain with G-Cter in SUMO1); alternate). Lys-15 is covalently cross-linked (Glycyl lysine isopeptide (Lys-Gly) (interchain with G-Cter in SUMO2); alternate). Residues Ser-25, Ser-32, Ser-34, and Ser-39 each carry the phosphoserine modification. Ser-44 is subject to Phosphoserine; by RPS6KA1. The tract at residues 84 to 120 (EKATMQNLNDRLASYLDKVRALEEANTELEVKIRDWY) is coil 1A. The 312-residue stretch at 84 to 395 (EKATMQNLND…RLLEGEDAHL (312 aa)) folds into the IF rod domain. At Thr-110 the chain carries Phosphothreonine. Positions 121–138 (QKQAPGPARDYSAYYQTI) are linker 1. Residues 139-230 (EDLKNKILVA…NHEEEMNALR (92 aa)) are coil 1B. Residues 231 to 250 (GQVGGEINVEMDAAPGVDLS) form a linker 12 region. Residues 251–392 (RILSEMRDQY…TYRRLLEGED (142 aa)) form a coil 2 region. Lys-278 is covalently cross-linked (Glycyl lysine isopeptide (Lys-Gly) (interchain with G-Cter in SUMO2)). The residue at position 279 (Thr-279) is a Phosphothreonine. Ser-323 carries the phosphoserine modification. The segment at 393 to 433 (AHLTQYKPKEPVTTRQVRTIVEEVQDGKVISSREQVHQTTR) is tail. Glycyl lysine isopeptide (Lys-Gly) (interchain with G-Cter in SUMO1); alternate cross-links involve residues Lys-399, Lys-401, and Lys-420. Residues Lys-399, Lys-401, and Lys-420 each participate in a glycyl lysine isopeptide (Lys-Gly) (interchain with G-Cter in SUMO2); alternate cross-link.

The protein belongs to the intermediate filament family. As to quaternary structure, heterodimer of a type I and a type II keratin. KRT17 associates with KRT6 isomers (KRT6A or KRT6B). Interacts with TRADD and SFN. Phosphorylation at Ser-44 occurs in a growth- and stress-dependent fashion in skin keratinocytes, it has no effect on filament organization.

Its subcellular location is the cytoplasm. Functionally, type I keratin involved in the formation and maintenance of various skin appendages, specifically in determining shape and orientation of hair. Required for the correct growth of hair follicles, in particular for the persistence of the anagen (growth) state. Modulates the function of TNF-alpha in the specific context of hair cycling. Regulates protein synthesis and epithelial cell growth through binding to the adapter protein SFN and by stimulating Akt/mTOR pathway. Involved in tissue repair. May be a marker of basal cell differentiation in complex epithelia and therefore indicative of a certain type of epithelial 'stem cells'. Acts as a promoter of epithelial proliferation by acting a regulator of immune response in skin: promotes Th1/Th17-dominated immune environment contributing to the development of basaloid skin tumors. May act as an autoantigen in the immunopathogenesis of psoriasis, with certain peptide regions being a major target for autoreactive T-cells and hence causing their proliferation. In Rattus norvegicus (Rat), this protein is Keratin, type I cytoskeletal 17.